A 37-amino-acid chain; its full sequence is M-oxotoxin-Ot2c (37 aa).

As to expression, expressed by the venom gland.

It is found in the secreted. Functionally, disrupts biological membranes, particularly those rich in phosphocholine. Has antimicrobial activity against Gram-negative bacterium E.coli, Gram-positive bacteria B.subtilis and S.aureus, and hemolytic activity against sheep, pig and guinea pig red blood cells. Has insecticidal activity against S.frugiperda ovarian cells by opening non-selective ion channels. Enhances the insecticidal activity of spider venom neurotoxic peptides. The chain is M-oxotoxin-Ot2c from Oxyopes takobius (Lynx spider).